The chain runs to 373 residues: Peptide chain release factor subunit 1 (373 aa).

The protein belongs to the eukaryotic release factor 1 family. As to quaternary structure, heterodimer of two subunits, one of which binds GTP.

It localises to the cytoplasm. Its function is as follows. Directs the termination of nascent peptide synthesis (translation) in response to the termination codons UAA, UAG and UGA. This chain is Peptide chain release factor subunit 1 (prf1), found in Aeropyrum pernix (strain ATCC 700893 / DSM 11879 / JCM 9820 / NBRC 100138 / K1).